Reading from the N-terminus, the 104-residue chain is Large ribosomal subunit protein eL30 (104 aa).

Belongs to the eukaryotic ribosomal protein eL30 family.

The protein is Large ribosomal subunit protein eL30 (rpl30e) of Sulfolobus acidocaldarius (strain ATCC 33909 / DSM 639 / JCM 8929 / NBRC 15157 / NCIMB 11770).